A 631-amino-acid polypeptide reads, in one-letter code: Shootin-1 (631 aa).

Position 1 is an N-acetylmethionine (Met-1). Residues Ser-3 and Ser-4 each carry the phosphoserine modification. Residues 7-353 (EKQLQLITSL…RVNQSENSVP (347 aa)) adopt a coiled-coil conformation. Ser-101 is modified (phosphoserine; by PAK1). Ser-249 carries the phosphoserine modification. Disordered stretches follow at residues 343 to 404 (KRVN…EVTD) and 417 to 508 (IKKG…KSMP). Pro residues predominate over residues 352 to 369 (VPPPPPPPPPLPPPPPNP). Ser-375 carries the post-translational modification Phosphoserine. A compositionally biased stretch (polar residues) spans 456–465 (LNKSTSSRSL). Residue Ser-473 is modified to Phosphoserine. Thr-487 is subject to Phosphothreonine. The span at 490–505 (ADSSSPTGILATSESK) shows a compositional bias: polar residues. A Phosphoserine modification is found at Ser-494. Thr-496 is modified (phosphothreonine). Residues Ser-506 and Ser-515 each carry the phosphoserine modification. Residues 530 to 631 (FNNPCPLTPE…KTGETDSSNC (102 aa)) are disordered. Position 537 is a phosphothreonine (Thr-537). Over residues 590–602 (PQTKDQAAEKDPT) the composition is skewed to basic and acidic residues.

It belongs to the shootin family. In terms of assembly, interacts with L1CAM; this interaction occurs at axonal growth cones. Interacts with actin filament retrograde flow; this interaction is enhanced in a netrin-1- and PAK1-dependent manner and promotes F-actin-substrate coupling and concomitant formation of traction forces at axonal growth cones. Interacts with RUFY3. Interacts with PFN2. Interacts (via N-terminus) with KIF20B; this interaction is direct and promotes the association of SHTN1 to microtubules in primary neurons. Associates with microtubule. In terms of processing, phosphorylated on Ser-101 and Ser-249 by PAK1 through a CDC42- and RAC1-dependent signaling pathway, which enhances its association with F-actin retrograde flow in filopodia and lamellipodia of axonal growth cones. Phosphorylation on Ser-101 and Ser-249 is increased by netrin-1. Expressed in hippocampal neurons.

It localises to the perikaryon. It is found in the cell projection. The protein localises to the axon. Its subcellular location is the growth cone. The protein resides in the cytoplasm. It localises to the cytoskeleton. It is found in the filopodium. The protein localises to the lamellipodium. Its function is as follows. Involved in the generation of internal asymmetric signals required for neuronal polarization and neurite outgrowth. Mediates netrin-1-induced F-actin-substrate coupling or 'clutch engagement' within the axon growth cone through activation of CDC42, RAC1 and PAK1-dependent signaling pathway, thereby converting the F-actin retrograde flow into traction forces, concomitantly with filopodium extension and axon outgrowth. Plays a role in cytoskeletal organization by regulating the subcellular localization of phosphoinositide 3-kinase (PI3K) activity at the axonal growth cone. Also plays a role in regenerative neurite outgrowth. In the developing cortex, cooperates with KIF20B to promote both the transition from the multipolar to the bipolar stage and the radial migration of cortical neurons from the ventricular zone toward the superficial layer of the neocortex. Involved in the accumulation of phosphatidylinositol 3,4,5-trisphosphate (PIP3) in the growth cone of primary hippocampal neurons. In Mus musculus (Mouse), this protein is Shootin-1.